The following is a 205-amino-acid chain: Small ribosomal subunit protein mS26 (205 aa).

The N-terminal 27 residues, 1–27, are a transit peptide targeting the mitochondrion; the sequence is MLRALSRLGAGTPCRPRAPLVLPARGR.

Belongs to the mitochondrion-specific ribosomal protein mS26 family. Component of the mitochondrial small ribosomal subunit (mt-SSU). Mature mammalian 55S mitochondrial ribosomes consist of a small (28S) and a large (39S) subunit. The 28S small subunit contains a 12S ribosomal RNA (12S mt-rRNA) and 30 different proteins. The 39S large subunit contains a 16S rRNA (16S mt-rRNA), a copy of mitochondrial valine transfer RNA (mt-tRNA(Val)), which plays an integral structural role, and 52 different proteins.

The protein localises to the mitochondrion. The protein is Small ribosomal subunit protein mS26 (MRPS26) of Homo sapiens (Human).